Consider the following 361-residue polypeptide: MRKFIIASGGTGGHFYPGFSLGKELRKRSYEVLFVVRKEDAAIKTLTKNNFNYKEINFTGFPRSANPIRHIIFCYKFIVSFWQTLGIINAFKPDVCVGMGGYLSFPVIVWAKIKGIKSAVHDSNTKIGLANKICAKFTNIFLLGLPTSDNIKNTKLVGTPIREEFGLDFNREEVLKSRGLNPNLATVLIFGGSQGSKKLNMAISKTAKKIVKKNDTVQFVHISGDKGYDKLRQEYRGCKNIRLFAYCHDIYFLMRAADFVVCRSGASTIAELYACRKPAVLIPFPYAADNHQYYNGMLLKKAGCAELFVEGDNLAPKLHEYIAGISKNKNILEFMERGYEMLELPDPLKSAEIIADTVESL.

Residues 11 to 13, N124, R162, S193, and Q292 contribute to the UDP-N-acetyl-alpha-D-glucosamine site; that span reads TGG.

This sequence belongs to the glycosyltransferase 28 family. MurG subfamily.

The protein localises to the cell inner membrane. The catalysed reaction is di-trans,octa-cis-undecaprenyl diphospho-N-acetyl-alpha-D-muramoyl-L-alanyl-D-glutamyl-meso-2,6-diaminopimeloyl-D-alanyl-D-alanine + UDP-N-acetyl-alpha-D-glucosamine = di-trans,octa-cis-undecaprenyl diphospho-[N-acetyl-alpha-D-glucosaminyl-(1-&gt;4)]-N-acetyl-alpha-D-muramoyl-L-alanyl-D-glutamyl-meso-2,6-diaminopimeloyl-D-alanyl-D-alanine + UDP + H(+). Its pathway is cell wall biogenesis; peptidoglycan biosynthesis. Functionally, cell wall formation. Catalyzes the transfer of a GlcNAc subunit on undecaprenyl-pyrophosphoryl-MurNAc-pentapeptide (lipid intermediate I) to form undecaprenyl-pyrophosphoryl-MurNAc-(pentapeptide)GlcNAc (lipid intermediate II). The sequence is that of UDP-N-acetylglucosamine--N-acetylmuramyl-(pentapeptide) pyrophosphoryl-undecaprenol N-acetylglucosamine transferase from Elusimicrobium minutum (strain Pei191).